The primary structure comprises 789 residues: Ent-kaur-16-ene synthase, chloroplastic (789 aa).

Asp-536, Asp-540, Asn-680, Ser-684, and Glu-688 together coordinate Mg(2+). Positions 536–540 match the DDXXD motif motif; it reads DDFYD.

It belongs to the terpene synthase family. Mg(2+) serves as cofactor. In terms of processing, the N-terminus is blocked. As to expression, abundant in most tissues. Present in low amounts in mature cotyledons.

It localises to the plastid. It is found in the chloroplast. The enzyme catalyses ent-copalyl diphosphate = ent-kaur-16-ene + diphosphate. The protein operates within plant hormone biosynthesis; gibberellin biosynthesis. Its function is as follows. Catalyzes the conversion of ent-copalyl diphosphate to the gibberellin precursor ent-kaur-16-ene. This Cucurbita maxima (Pumpkin) protein is Ent-kaur-16-ene synthase, chloroplastic.